Reading from the N-terminus, the 149-residue chain is Probable calcium-binding protein CML25/26 (149 aa).

EF-hand domains are found at residues 1–35 (MASS…ALGE), 37–72 (VSEE…HQLQ), 77–113 (ESLR…LGSE), and 117–149 (LEME…MLMA). Ca(2+) is bound by residues Asp-13, Asp-15, Asp-17, Lys-19, Glu-24, Asp-50, Asp-52, Asp-54, and Glu-61. Residues Asp-130, Asn-132, Asp-134, and Glu-141 each coordinate Ca(2+).

In terms of biological role, potential calcium sensor. The sequence is that of Probable calcium-binding protein CML25/26 (CML25) from Oryza sativa subsp. japonica (Rice).